A 400-amino-acid polypeptide reads, in one-letter code: MKGSLLLAGATLLGCTSAKLHSLKLKKVSLKEQLEHADIDVQIKSLGQKYMGIRPEQHEQQMFKEQTPIEVESGHNVLIDNFLNAQYFSEISIGTPPQTFKVVLDTGSSNLWVPGKDCSSIACFLHSTYDSSASSTYSKNGTKFAIRYGSGSLEGFVSRDSVKIGDMTIKKQLFAEATSEPGLAFAFGRFDGIMGMGFSSISVNGITPPFYNMIDQGLIDEPVFSFYLGDTNKDGDQSVVTFGGSDTNHFTGDMTTIPLRRKAYWEVDFDAISLGKDTAALENTGIILDTGTSLIALPTTLAEMINTQIGATKSWNGQYTLDCAKRDSLPDVTFTLSGHNFTIGPHDYTLEVSGTCISSFMGMDFPEPVGPLAILGDSFLRRYYSVYDLGKGTVGLAKAK.

The first 18 residues, Met-1–Ala-18, serve as a signal peptide directing secretion. Residues Lys-19–Glu-72 constitute a propeptide, activation peptide. The 311-residue stretch at Tyr-87–Ala-397 folds into the Peptidase A1 domain. Asp-105 is an active-site residue. Residues Cys-118 and Cys-123 are joined by a disulfide bond. A glycan (N-linked (GlcNAc...) asparagine) is linked at Asn-140. Residue Asp-289 is part of the active site. A disulfide bridge connects residues Cys-323 and Cys-356. Asn-340 is a glycosylation site (N-linked (GlcNAc...) asparagine).

Belongs to the peptidase A1 family.

The protein localises to the vacuole lumen. It localises to the secreted. It catalyses the reaction Hydrolysis of proteins with broad specificity for peptide bonds. Cleaves -Leu-Leu-|-Val-Tyr- bond in a synthetic substrate. Does not act on esters of Tyr or Arg.. Vacuolar aspartic endopeptidase which is probably also secreted and contributes to virulence. This is Probable vacuolar protease A (PEP2) from Arthroderma benhamiae (strain ATCC MYA-4681 / CBS 112371) (Trichophyton mentagrophytes).